Consider the following 171-residue polypeptide: AN1-type zinc finger protein 2A (171 aa).

AN1-type zinc fingers lie at residues 4-52 (PDLG…KKDV) and 94-142 (KVFT…SSVS). 16 residues coordinate Zn(2+): C10, C15, C25, C28, C33, H36, H42, C44, C100, C105, C115, C118, C123, H126, H132, and C134. A disordered region spans residues 135–171 (QAGSSSVSRGRSSASRAAEQKPSGVSWLAQRLRRTVK). Low complexity predominate over residues 136-151 (AGSSSVSRGRSSASRA).

The protein localises to the cytoplasm. The protein resides in the nucleus. This Rattus norvegicus (Rat) protein is AN1-type zinc finger protein 2A (Zfand2a).